The chain runs to 126 residues: Protein LiaI (126 aa).

A run of 2 helical transmembrane segments spans residues 11 to 31 (FLLI…GFII) and 56 to 76 (IIVG…VVGI).

It is found in the cell membrane. The polypeptide is Protein LiaI (liaI) (Bacillus subtilis (strain 168)).